A 65-amino-acid polypeptide reads, in one-letter code: Toxin Co52 (65 aa).

The region spanning 2 to 65 (EDGYLVDKTG…PTWPLPNKTC (64 aa)) is the LCN-type CS-alpha/beta domain. 4 disulfides stabilise this stretch: Cys12-Cys65, Cys16-Cys41, Cys25-Cys46, and Cys29-Cys48.

As to expression, expressed by the venom gland.

It localises to the secreted. In terms of biological role, beta toxins bind voltage-independently at site-4 of sodium channels (Nav) and shift the voltage of activation toward more negative potentials thereby affecting sodium channel activation and promoting spontaneous and repetitive firing. Not toxic to mice, chicks, crickets or woodlice (at 5 ug). In Centruroides ornatus (Scorpion), this protein is Toxin Co52.